A 576-amino-acid chain; its full sequence is 2-isopropylmalate synthase (576 aa).

Positions 31 to 305 (PIWMSTDLRD…DPGLDFSHVN (275 aa)) constitute a Pyruvate carboxyltransferase domain. Residues D40, H244, H246, and N280 each contribute to the Mg(2+) site. The segment at 437–576 (ADGPIGYVSH…RGMAPSMELA (140 aa)) is regulatory domain.

Belongs to the alpha-IPM synthase/homocitrate synthase family. LeuA type 2 subfamily. Homodimer. The cofactor is Mg(2+).

Its subcellular location is the cytoplasm. It carries out the reaction 3-methyl-2-oxobutanoate + acetyl-CoA + H2O = (2S)-2-isopropylmalate + CoA + H(+). The protein operates within amino-acid biosynthesis; L-leucine biosynthesis; L-leucine from 3-methyl-2-oxobutanoate: step 1/4. Its function is as follows. Catalyzes the condensation of the acetyl group of acetyl-CoA with 3-methyl-2-oxobutanoate (2-ketoisovalerate) to form 3-carboxy-3-hydroxy-4-methylpentanoate (2-isopropylmalate). The protein is 2-isopropylmalate synthase of Ralstonia nicotianae (strain ATCC BAA-1114 / GMI1000) (Ralstonia solanacearum).